The primary structure comprises 122 residues: Large ribosomal subunit protein uL14 (122 aa).

The protein belongs to the universal ribosomal protein uL14 family. In terms of assembly, part of the 50S ribosomal subunit. Forms a cluster with proteins L3 and L19. In the 70S ribosome, L14 and L19 interact and together make contacts with the 16S rRNA in bridges B5 and B8.

Binds to 23S rRNA. Forms part of two intersubunit bridges in the 70S ribosome. The sequence is that of Large ribosomal subunit protein uL14 from Lactococcus lactis subsp. lactis (strain IL1403) (Streptococcus lactis).